An 870-amino-acid chain; its full sequence is DNA mismatch repair protein MutS (870 aa).

ATP is bound at residue Gly-608–Ser-615.

It belongs to the DNA mismatch repair MutS family.

This protein is involved in the repair of mismatches in DNA. It is possible that it carries out the mismatch recognition step. This protein has a weak ATPase activity. The protein is DNA mismatch repair protein MutS of Persephonella marina (strain DSM 14350 / EX-H1).